The primary structure comprises 246 residues: Large ribosomal subunit protein uL2 (246 aa).

The tract at residues 197–227 (SPYAHPHGGGSHQKGGTPVPKTAPPGQKVGF) is disordered.

The protein belongs to the universal ribosomal protein uL2 family. Part of the 50S ribosomal subunit. Forms a bridge to the 30S subunit in the 70S ribosome.

One of the primary rRNA binding proteins. Required for association of the 30S and 50S subunits to form the 70S ribosome, for tRNA binding and peptide bond formation. It has been suggested to have peptidyltransferase activity; this is somewhat controversial. Makes several contacts with the 16S rRNA in the 70S ribosome. This chain is Large ribosomal subunit protein uL2, found in Pyrobaculum aerophilum (strain ATCC 51768 / DSM 7523 / JCM 9630 / CIP 104966 / NBRC 100827 / IM2).